A 192-amino-acid chain; its full sequence is ATP synthase subunit b (192 aa).

Residues 7–27 traverse the membrane as a helical segment; sequence LLLVLGVMLLATGVALAAGGE.

It belongs to the ATPase B chain family. As to quaternary structure, F-type ATPases have 2 components, F(1) - the catalytic core - and F(0) - the membrane proton channel. F(1) has five subunits: alpha(3), beta(3), gamma(1), delta(1), epsilon(1). F(0) has three main subunits: a(1), b(2) and c(10-14). The alpha and beta chains form an alternating ring which encloses part of the gamma chain. F(1) is attached to F(0) by a central stalk formed by the gamma and epsilon chains, while a peripheral stalk is formed by the delta and b chains.

It localises to the cell inner membrane. Functionally, f(1)F(0) ATP synthase produces ATP from ADP in the presence of a proton or sodium gradient. F-type ATPases consist of two structural domains, F(1) containing the extramembraneous catalytic core and F(0) containing the membrane proton channel, linked together by a central stalk and a peripheral stalk. During catalysis, ATP synthesis in the catalytic domain of F(1) is coupled via a rotary mechanism of the central stalk subunits to proton translocation. Component of the F(0) channel, it forms part of the peripheral stalk, linking F(1) to F(0). This Oleidesulfovibrio alaskensis (strain ATCC BAA-1058 / DSM 17464 / G20) (Desulfovibrio alaskensis) protein is ATP synthase subunit b.